The chain runs to 96 residues: Co-chaperonin GroES (96 aa).

Belongs to the GroES chaperonin family. As to quaternary structure, heptamer of 7 subunits arranged in a ring. Interacts with the chaperonin GroEL.

The protein resides in the cytoplasm. In terms of biological role, together with the chaperonin GroEL, plays an essential role in assisting protein folding. The GroEL-GroES system forms a nano-cage that allows encapsulation of the non-native substrate proteins and provides a physical environment optimized to promote and accelerate protein folding. GroES binds to the apical surface of the GroEL ring, thereby capping the opening of the GroEL channel. The protein is Co-chaperonin GroES of Wolbachia sp. subsp. Drosophila simulans (strain wRi).